Consider the following 639-residue polypeptide: Uridine permease (639 aa).

Positions 1–37 (MPVSDSGFDNSSKTMKDDTIPTEDYEEITKESEMGDA) are disordered. At 1-162 (MPVSDSGFDN…LQLGLNWWQT (162 aa)) the chain is on the cytoplasmic side. Thr54 is modified (phosphothreonine). Residue Ser56 is modified to Phosphoserine. A helical membrane pass occupies residues 163-180 (WICIWVGYTFVAFFLILG). Residues 181–200 (SKVGNNYHISFPISSRVSFG) are Extracellular-facing. Residues 201 to 225 (IYFSIWIVINRVVMACVWNSTLAYI) traverse the membrane as a helical segment. Residues 226-259 (GSQCVQLMLKAIFGTNLNTRIKDTIKNPNLTNFE) lie on the Cytoplasmic side of the membrane. Residues 260-276 (FMCFMVFWVACLPFLWF) form a helical membrane-spanning segment. Residues 277–283 (PPDKLRH) lie on the Extracellular side of the membrane. A helical membrane pass occupies residues 284–305 (IFALKSAITPFAAFGFLIWTLC). At 306 to 367 (KAKGHLALGS…KTYKSSVYSQ (62 aa)) the chain is on the cytoplasmic side. A helical membrane pass occupies residues 368 to 392 (LIALPVCYAIISLIGILSVSAAYTL). Over 393 to 416 (YGVNYWSPLDILNRYLDNYTSGNR) the chain is Extracellular. The chain crosses the membrane as a helical span at residues 417–435 (AGVFLISFIFAFDQLGANL). The Cytoplasmic segment spans residues 436 to 460 (SGNSIPAGTDLTALLPKFINIRRGS). Residues 461 to 477 (YICALISLAICPWDLLS) traverse the membrane as a helical segment. At 478–483 (SSSKFT) the chain is on the extracellular side. The chain crosses the membrane as a helical span at residues 484 to 507 (TALAAYAVFLSAIAGVISADYFIV). Over 508–537 (RKGYVNIFHCYTDKPGSYYMYNKYGTNWRA) the chain is Cytoplasmic. Residues 538 to 562 (VVAYIFGIAPNFAGFLGSVGVSVPI) traverse the membrane as a helical segment. Topologically, residues 563-572 (GAMKVYYLNY) are extracellular. A helical transmembrane segment spans residues 573–590 (FVGYLLAALSYCILVYFY). Residues 591–639 (PIKGIPGDAKITDRKWLEEWVEVEEFGTEREAFEEYGGVSTGYEKIRYI) are Cytoplasmic-facing. Lys635 participates in a covalent cross-link: Glycyl lysine isopeptide (Lys-Gly) (interchain with G-Cter in ubiquitin).

This sequence belongs to the purine-cytosine permease (2.A.39) family.

The protein localises to the membrane. Functionally, high-affinity transport of uridine. The sequence is that of Uridine permease (FUI1) from Saccharomyces cerevisiae (strain ATCC 204508 / S288c) (Baker's yeast).